A 400-amino-acid chain; its full sequence is DNA polymerase IV (400 aa).

The UmuC domain maps to 5–187; sequence IFLVDMNAFF…LPVEFMNGIG (183 aa). Positions 9 and 105 each coordinate Mg(2+). The active site involves E106.

Belongs to the DNA polymerase type-Y family. Monomer. Requires Mg(2+) as cofactor.

It localises to the cytoplasm. It carries out the reaction DNA(n) + a 2'-deoxyribonucleoside 5'-triphosphate = DNA(n+1) + diphosphate. Its function is as follows. Poorly processive, error-prone DNA polymerase involved in untargeted mutagenesis. Copies undamaged DNA at stalled replication forks, which arise in vivo from mismatched or misaligned primer ends. These misaligned primers can be extended by PolIV. Exhibits no 3'-5' exonuclease (proofreading) activity. May be involved in translesional synthesis, in conjunction with the beta clamp from PolIII. The chain is DNA polymerase IV from Clostridium kluyveri (strain ATCC 8527 / DSM 555 / NBRC 12016 / NCIMB 10680 / K1).